The sequence spans 643 residues: 1-deoxy-D-xylulose-5-phosphate synthase (643 aa).

Residues H72 and 113-115 contribute to the thiamine diphosphate site; that span reads GHA. A Mg(2+)-binding site is contributed by D144. Residues 145–146, N174, Y287, and E370 each bind thiamine diphosphate; that span reads GA. N174 provides a ligand contact to Mg(2+).

Belongs to the transketolase family. DXPS subfamily. As to quaternary structure, homodimer. Requires Mg(2+) as cofactor. Thiamine diphosphate serves as cofactor.

It carries out the reaction D-glyceraldehyde 3-phosphate + pyruvate + H(+) = 1-deoxy-D-xylulose 5-phosphate + CO2. The protein operates within metabolic intermediate biosynthesis; 1-deoxy-D-xylulose 5-phosphate biosynthesis; 1-deoxy-D-xylulose 5-phosphate from D-glyceraldehyde 3-phosphate and pyruvate: step 1/1. In terms of biological role, catalyzes the acyloin condensation reaction between C atoms 2 and 3 of pyruvate and glyceraldehyde 3-phosphate to yield 1-deoxy-D-xylulose-5-phosphate (DXP). This is 1-deoxy-D-xylulose-5-phosphate synthase from Synechococcus sp. (strain CC9605).